A 317-amino-acid chain; its full sequence is Cell division protein FtsQ (317 aa).

Residues 1–63 lie on the Cytoplasmic side of the membrane; it reads MDGGGRFVFA…RIHIPAHTGT (63 aa). Residues 64 to 82 form a helical membrane-spanning segment; sequence ISAVAFYAMIGLYGMSLGG. The Periplasmic portion of the chain corresponds to 83–317; the sequence is HTNIVTQTTT…KALKKAEKNT (235 aa). The POTRA domain maps to 97–165; that stretch reads FAVEDVKVSG…KTVEVRLKER (69 aa).

This sequence belongs to the FtsQ/DivIB family. FtsQ subfamily.

Its subcellular location is the cell inner membrane. In terms of biological role, essential cell division protein. This chain is Cell division protein FtsQ, found in Agrobacterium fabrum (strain C58 / ATCC 33970) (Agrobacterium tumefaciens (strain C58)).